Reading from the N-terminus, the 101-residue chain is Protein Tat (101 aa).

Residues 1-20 form a disordered region; sequence MEVVDPNLDPWKHPGSQPET. The interaction with human CREBBP stretch occupies residues 1-24; the sequence is MEVVDPNLDPWKHPGSQPETPCNK. The transactivation stretch occupies residues 1–48; the sequence is MEVVDPNLDPWKHPGSQPETPCNKCYCKKCCFHCQLCFTRKGLGISYG. 3 residues coordinate Zn(2+): cysteine 22, cysteine 25, and cysteine 27. Positions 22-37 are cysteine-rich; it reads CNKCYCKKCCFHCQLC. Lysine 28 is subject to N6-acetyllysine; by host PCAF. Residues cysteine 30, histidine 33, cysteine 34, and cysteine 37 each coordinate Zn(2+). Residues 38 to 48 form a core region; that stretch reads FTRKGLGISYG. The tract at residues 47–101 is disordered; that stretch reads YGRKKRRQRRRTPQSGEVHQDPVSKQPLSQTRGDPKGPEESKKKVESKTKTDPSD. Residues 48–58 show a composition bias toward basic residues; the sequence is GRKKRRQRRRT. The short motif at 49-57 is the Nuclear localization signal, RNA-binding (TAR), and protein transduction element; the sequence is RKKRRQRRR. The interval 49–86 is interaction with the host capping enzyme RNGTT; the sequence is RKKRRQRRRTPQSGEVHQDPVSKQPLSQTRGDPKGPEE. Residues lysine 50 and lysine 51 each carry the N6-acetyllysine; by host EP300 and GCN5L2 modification. Residues arginine 52 and arginine 53 each carry the asymmetric dimethylarginine; by host PRMT6 modification. Lysine 71 is covalently cross-linked (Glycyl lysine isopeptide (Lys-Gly) (interchain with G-Cter in ubiquitin)). The Cell attachment site signature appears at 78-80; that stretch reads RGD. Positions 79 to 101 are enriched in basic and acidic residues; it reads GDPKGPEESKKKVESKTKTDPSD.

This sequence belongs to the lentiviruses Tat family. In terms of assembly, interacts with host CCNT1. Associates with the P-TEFb complex composed at least of Tat, P-TEFb (CDK9 and CCNT1), TAR RNA, RNA Pol II. Recruits the HATs CREBBP, TAF1/TFIID, EP300, PCAF and GCN5L2. Interacts with host KAT5/Tip60; this interaction targets the latter to degradation. Interacts with the host deacetylase SIRT1. Interacts with host capping enzyme RNGTT; this interaction stimulates RNGTT. Binds to host KDR, and to the host integrins ITGAV/ITGB3 and ITGA5/ITGB1. Interacts with host KPNB1/importin beta-1 without previous binding to KPNA1/importin alpha-1. Interacts with EIF2AK2. Interacts with host nucleosome assembly protein NAP1L1; this interaction may be required for the transport of Tat within the nucleus, since the two proteins interact at the nuclear rim. Interacts with host C1QBP/SF2P32; this interaction involves lysine-acetylated Tat. Interacts with the host chemokine receptors CCR2, CCR3 and CXCR4. Interacts with host DPP4/CD26; this interaction may trigger an anti-proliferative effect. Interacts with host LDLR. Interacts with the host extracellular matrix metalloproteinase MMP1. Interacts with host PRMT6; this interaction mediates Tat's methylation. Interacts with, and is ubiquitinated by MDM2/Hdm2. Interacts with host PSMC3 and HTATIP2. Interacts with STAB1; this interaction may overcome SATB1-mediated repression of IL2 and IL2RA (interleukin) in T cells by binding to the same domain than HDAC1. Interacts (when acetylated) with human CDK13, thereby increasing HIV-1 mRNA splicing and promoting the production of the doubly spliced HIV-1 protein Nef. Interacts with host TBP; this interaction modulates the activity of transcriptional pre-initiation complex. Interacts with host RELA. Interacts with host PLSCR1; this interaction negatively regulates Tat transactivation activity by altering its subcellular distribution. Post-translationally, asymmetrical arginine methylation by host PRMT6 seems to diminish the transactivation capacity of Tat and affects the interaction with host CCNT1. Acetylation by EP300, CREBBP, GCN5L2/GCN5 and PCAF regulates the transactivation activity of Tat. EP300-mediated acetylation of Lys-50 promotes dissociation of Tat from the TAR RNA through the competitive binding to PCAF's bromodomain. In addition, the non-acetylated Tat's N-terminus can also interact with PCAF. PCAF-mediated acetylation of Lys-28 enhances Tat's binding to CCNT1. Lys-50 is deacetylated by SIRT1. In terms of processing, polyubiquitination by host MDM2 does not target Tat to degradation, but activates its transactivation function and fosters interaction with CCNT1 and TAR RNA. Post-translationally, phosphorylated by EIF2AK2 on serine and threonine residues adjacent to the basic region important for TAR RNA binding and function. Phosphorylation of Tat by EIF2AK2 is dependent on the prior activation of EIF2AK2 by dsRNA.

The protein resides in the host nucleus. Its subcellular location is the host nucleolus. The protein localises to the host cytoplasm. It is found in the secreted. Its function is as follows. Transcriptional activator that increases RNA Pol II processivity, thereby increasing the level of full-length viral transcripts. Recognizes a hairpin structure at the 5'-LTR of the nascent viral mRNAs referred to as the transactivation responsive RNA element (TAR) and recruits the cyclin T1-CDK9 complex (P-TEFb complex) that will in turn hyperphosphorylate the RNA polymerase II to allow efficient elongation. The CDK9 component of P-TEFb and other Tat-activated kinases hyperphosphorylate the C-terminus of RNA Pol II that becomes stabilized and much more processive. Other factors such as HTATSF1/Tat-SF1, SUPT5H/SPT5, and HTATIP2 are also important for Tat's function. Besides its effect on RNA Pol II processivity, Tat induces chromatin remodeling of proviral genes by recruiting the histone acetyltransferases (HATs) CREBBP, EP300 and PCAF to the chromatin. This also contributes to the increase in proviral transcription rate, especially when the provirus integrates in transcriptionally silent region of the host genome. To ensure maximal activation of the LTR, Tat mediates nuclear translocation of NF-kappa-B by interacting with host RELA. Through its interaction with host TBP, Tat may also modulate transcription initiation. Tat can reactivate a latently infected cell by penetrating in it and transactivating its LTR promoter. In the cytoplasm, Tat is thought to act as a translational activator of HIV-1 mRNAs. Functionally, extracellular circulating Tat can be endocytosed by surrounding uninfected cells via the binding to several surface receptors such as CD26, CXCR4, heparan sulfate proteoglycans (HSPG) or LDLR. Neurons are rarely infected, but they internalize Tat via their LDLR. Through its interaction with nuclear HATs, Tat is potentially able to control the acetylation-dependent cellular gene expression. Modulates the expression of many cellular genes involved in cell survival, proliferation or in coding for cytokines or cytokine receptors. Tat plays a role in T-cell and neurons apoptosis. Tat induced neurotoxicity and apoptosis probably contribute to neuroAIDS. Circulating Tat also acts as a chemokine-like and/or growth factor-like molecule that binds to specific receptors on the surface of the cells, affecting many cellular pathways. In the vascular system, Tat binds to ITGAV/ITGB3 and ITGA5/ITGB1 integrins dimers at the surface of endothelial cells and competes with bFGF for heparin-binding sites, leading to an excess of soluble bFGF. This is Protein Tat from Homo sapiens (Human).